The chain runs to 440 residues: Protein eva-1 homolog C (440 aa).

The span at 1-13 shows a compositional bias: pro residues; that stretch reads MLLPGHPRPPPAP. The disordered stretch occupies residues 1–23; that stretch reads MLLPGHPRPPPAPQSAQNQGLRR. An N-terminal signal peptide occupies residues 1 to 48; the sequence is MLLPGHPRPPPAPQSAQNQGLRRQVEPPGQLLRLFYCTVLVCSKETSA. Residues 49-321 lie on the Extracellular side of the membrane; it reads LTDFSGYLTK…AYIRAHPERA (273 aa). Asparagine 62, asparagine 109, and asparagine 165 each carry an N-linked (GlcNAc...) asparagine glycan. The SUEL-type lectin 1 domain occupies 67–159; it reads ACDGDYLNLQ…KYLLVSFKCQ (93 aa). In terms of domain architecture, SUEL-type lectin 2 spans 168 to 260; it reads VCENQELKLH…KYLTVAYACV (93 aa). Residues 322–342 traverse the membrane as a helical segment; that stretch reads ALLFMSSVCIGLLLTLCALVI. The Cytoplasmic portion of the chain corresponds to 343–440; that stretch reads RVSCTKDFRE…SLPRNVGHFY (98 aa). Residues 364 to 384 form a disordered region; the sequence is SDKAEEDSEEDLEEEDSSDSQ. Over residues 367–381 the composition is skewed to acidic residues; the sequence is AEEDSEEDLEEEDSS.

This sequence belongs to the EVA1 family. In terms of tissue distribution, ubiquitous.

Its subcellular location is the cell membrane. Binds heparin. This is Protein eva-1 homolog C (Eva1c) from Mus musculus (Mouse).